A 146-amino-acid polypeptide reads, in one-letter code: Hemoglobin subunit beta (146 aa).

Positions 2-146 (EWTQQERSII…VVFALGRKYH (145 aa)) constitute a Globin domain. His-63 and His-92 together coordinate heme b.

Belongs to the globin family. Heterotetramer of two alpha chains and two beta chains. Red blood cells.

Its function is as follows. Involved in oxygen transport from gills to the various peripheral tissues. This Thunnus thynnus (Atlantic bluefin tuna) protein is Hemoglobin subunit beta (hbb).